Consider the following 308-residue polypeptide: ATP synthase gamma chain (308 aa).

This sequence belongs to the ATPase gamma chain family. As to quaternary structure, F-type ATPases have 2 components, CF(1) - the catalytic core - and CF(0) - the membrane proton channel. CF(1) has five subunits: alpha(3), beta(3), gamma(1), delta(1), epsilon(1). CF(0) has three main subunits: a, b and c.

The protein localises to the cell inner membrane. Functionally, produces ATP from ADP in the presence of a proton gradient across the membrane. The gamma chain is believed to be important in regulating ATPase activity and the flow of protons through the CF(0) complex. In Salinibacter ruber (strain DSM 13855 / M31), this protein is ATP synthase gamma chain.